A 215-amino-acid chain; its full sequence is uncharacterized protein (215 aa).

5 helical membrane-spanning segments follow: residues 9–29 (WTFYFAGLIILAFGVSLTIEG), 50–70 (LTVGQWSIIIGALIVGFTSLF), 77–97 (IGALLNMVLIGVFIDFFNFIL), 107–127 (IIVFSLGVVLIGYGVGVYVSA), and 160–180 (ILFAAWGMGGPIGFGTILTAI).

Its subcellular location is the cell membrane. This is an uncharacterized protein from Bacillus subtilis (strain 168).